A 496-amino-acid polypeptide reads, in one-letter code: Aspartyl/glutamyl-tRNA(Asn/Gln) amidotransferase subunit B (496 aa).

It belongs to the GatB/GatE family. GatB subfamily. As to quaternary structure, heterotrimer of A, B and C subunits.

The catalysed reaction is L-glutamyl-tRNA(Gln) + L-glutamine + ATP + H2O = L-glutaminyl-tRNA(Gln) + L-glutamate + ADP + phosphate + H(+). It catalyses the reaction L-aspartyl-tRNA(Asn) + L-glutamine + ATP + H2O = L-asparaginyl-tRNA(Asn) + L-glutamate + ADP + phosphate + 2 H(+). Functionally, allows the formation of correctly charged Asn-tRNA(Asn) or Gln-tRNA(Gln) through the transamidation of misacylated Asp-tRNA(Asn) or Glu-tRNA(Gln) in organisms which lack either or both of asparaginyl-tRNA or glutaminyl-tRNA synthetases. The reaction takes place in the presence of glutamine and ATP through an activated phospho-Asp-tRNA(Asn) or phospho-Glu-tRNA(Gln). The polypeptide is Aspartyl/glutamyl-tRNA(Asn/Gln) amidotransferase subunit B (Xanthobacter autotrophicus (strain ATCC BAA-1158 / Py2)).